Here is a 118-residue protein sequence, read N- to C-terminus: MPRVKGGTVTRQRRKKVIKLAKGYYGSKNTLFKVANQQVMKSLMYAFRDRRQKKRDFRKLWITRINAAARMNGLSYSRLMHGLKNAGIEVNRKMLADLAVHDEKAFAELATVAKNNIN.

The protein belongs to the bacterial ribosomal protein bL20 family.

Binds directly to 23S ribosomal RNA and is necessary for the in vitro assembly process of the 50S ribosomal subunit. It is not involved in the protein synthesizing functions of that subunit. This chain is Large ribosomal subunit protein bL20, found in Bacillus anthracis (strain CDC 684 / NRRL 3495).